We begin with the raw amino-acid sequence, 453 residues long: Ribosomal protein uS12 methylthiotransferase RimO (453 aa).

Positions 5-120 (PKVGFVSLGC…VMQAVHSHLP (116 aa)) constitute an MTTase N-terminal domain. Residues Cys14, Cys50, Cys79, Cys151, Cys155, and Cys158 each coordinate [4Fe-4S] cluster. Positions 137–382 (LTPRHYAYLK…MEVAEEVSAN (246 aa)) constitute a Radical SAM core domain. Positions 385 to 453 (QRKVGKTLKV…ADGHDLWGEV (69 aa)) constitute a TRAM domain.

Belongs to the methylthiotransferase family. RimO subfamily. The cofactor is [4Fe-4S] cluster.

Its subcellular location is the cytoplasm. It carries out the reaction L-aspartate(89)-[ribosomal protein uS12]-hydrogen + (sulfur carrier)-SH + AH2 + 2 S-adenosyl-L-methionine = 3-methylsulfanyl-L-aspartate(89)-[ribosomal protein uS12]-hydrogen + (sulfur carrier)-H + 5'-deoxyadenosine + L-methionine + A + S-adenosyl-L-homocysteine + 2 H(+). In terms of biological role, catalyzes the methylthiolation of an aspartic acid residue of ribosomal protein uS12. The protein is Ribosomal protein uS12 methylthiotransferase RimO of Burkholderia cenocepacia (strain HI2424).